Consider the following 500-residue polypeptide: Transcription factor-like 5 protein (500 aa).

Pro residues-rich tracts occupy residues 1–12 and 196–210; these read MSGPGPREPPPE and AEPP…PPEP. 2 disordered regions span residues 1 to 34 and 191 to 211; these read MSGP…ALGE and FNSI…PEPG. Residues 347–356 form an R3 epitope (recognized by Chagas's antibodies) region; it reads MRQLDTNVER. The disordered stretch occupies residues 365–410; it reads VGEGATATQGAWQSSESSQANLGEQAQSGPQGGRSQRRERHNRMER. Residues 370 to 393 show a composition bias toward polar residues; it reads TATQGAWQSSESSQANLGEQAQSG. The bHLH domain maps to 400–450; it reads QRRERHNRMERDRRRRIRICCDELNLLVPFCNAETDKATTLQWTTAFLKYI. The tract at residues 481–500 is R1 epitope (recognized by Chagas's antibodies); the sequence is SLVTCPAQGSLQSSPSMEIK.

As to quaternary structure, efficient DNA binding requires dimerization with another bHLH protein. As to expression, isoform 3 is testis specific. Isoform 2 is pancreas specific.

It localises to the nucleus. Putative transcription factor. Isoform 3 may play a role in early spermatogenesis. This is Transcription factor-like 5 protein (TCFL5) from Homo sapiens (Human).